We begin with the raw amino-acid sequence, 346 residues long: GTPase Obg (346 aa).

The 159-residue stretch at methionine 1 to leucine 159 folds into the Obg domain. Residues asparagine 127–glutamate 149 are disordered. A compositionally biased stretch (polar residues) spans phenylalanine 130–glutamine 140. One can recognise an OBG-type G domain in the interval alanine 160–glutamate 333. GTP contacts are provided by residues glycine 166–serine 173, phenylalanine 191–tyrosine 195, aspartate 213–glycine 216, asparagine 283–aspartate 286, and serine 314–valine 316. Mg(2+)-binding residues include serine 173 and threonine 193.

It belongs to the TRAFAC class OBG-HflX-like GTPase superfamily. OBG GTPase family. In terms of assembly, monomer. Mg(2+) is required as a cofactor.

Its subcellular location is the cytoplasm. In terms of biological role, an essential GTPase which binds GTP, GDP and possibly (p)ppGpp with moderate affinity, with high nucleotide exchange rates and a fairly low GTP hydrolysis rate. Plays a role in control of the cell cycle, stress response, ribosome biogenesis and in those bacteria that undergo differentiation, in morphogenesis control. The chain is GTPase Obg from Hydrogenovibrio crunogenus (strain DSM 25203 / XCL-2) (Thiomicrospira crunogena).